Reading from the N-terminus, the 244-residue chain is MGKLLFLFITLILFEQQSLAALPTGDSEKYLRARESMVQNQLSTRDIKDKRVLTAMREVPRHLFVPDLLVFKAYTDSPLPIGEGQTISQPYIVALMTELLELTGSERVLEIGTGSGYQAAVLSQVAKEVFTIEIKEKLCTKAGKLLDSLGYTNIQARCGDGYFGWNKEAPFDAIMITAAVDHVPPPLLAQLKDGGRLVLPLGNPFSYQNLVLVTRKGDDYRVWQISGVLFVPMTGHALKDSGEK.

Ser-88 is an active-site residue.

Belongs to the methyltransferase superfamily. L-isoaspartyl/D-aspartyl protein methyltransferase family.

Its subcellular location is the cytoplasm. The enzyme catalyses [protein]-L-isoaspartate + S-adenosyl-L-methionine = [protein]-L-isoaspartate alpha-methyl ester + S-adenosyl-L-homocysteine. Its function is as follows. Catalyzes the methyl esterification of L-isoaspartyl residues in peptides and proteins that result from spontaneous decomposition of normal L-aspartyl and L-asparaginyl residues. It plays a role in the repair and/or degradation of damaged proteins. The chain is Protein-L-isoaspartate O-methyltransferase 2 from Shewanella sediminis (strain HAW-EB3).